The primary structure comprises 198 residues: Ribosome maturation factor RimM (198 aa).

The disordered stretch occupies residues 1–21; it reads MPPPTASTPDDSADPGPDFAD. A PRC barrel domain is found at 122 to 195; that stretch reads DDELFADDLV…RIVVRPIDGL (74 aa).

Belongs to the RimM family. Binds ribosomal protein uS19.

The protein resides in the cytoplasm. Functionally, an accessory protein needed during the final step in the assembly of 30S ribosomal subunit, possibly for assembly of the head region. Essential for efficient processing of 16S rRNA. May be needed both before and after RbfA during the maturation of 16S rRNA. It has affinity for free ribosomal 30S subunits but not for 70S ribosomes. This Salinibacter ruber (strain DSM 13855 / M31) protein is Ribosome maturation factor RimM.